Here is a 363-residue protein sequence, read N- to C-terminus: Protein RecA (363 aa).

66–73 provides a ligand contact to ATP; the sequence is GPESSGKT. The disordered stretch occupies residues 327–363; sequence YGIDEKSIADRENPEKIKEKREETSEENKTDNSEKTK. The segment covering 329–363 has biased composition (basic and acidic residues); sequence IDEKSIADRENPEKIKEKREETSEENKTDNSEKTK.

It belongs to the RecA family.

It is found in the cytoplasm. Can catalyze the hydrolysis of ATP in the presence of single-stranded DNA, the ATP-dependent uptake of single-stranded DNA by duplex DNA, and the ATP-dependent hybridization of homologous single-stranded DNAs. It interacts with LexA causing its activation and leading to its autocatalytic cleavage. The chain is Protein RecA from Lactobacillus acidophilus (strain ATCC 700396 / NCK56 / N2 / NCFM).